A 631-amino-acid chain; its full sequence is Double-strand-break repair protein rad21 homolog (631 aa).

At Ser-46 the chain carries Phosphoserine. Residue Lys-48 forms a Glycyl lysine isopeptide (Lys-Gly) (interchain with G-Cter in SUMO2) linkage. Residues 126–282 (DIDVAQQFSL…GGPDSPDSVD (157 aa)) are required for interaction with SMARCA5. At Ser-153 the chain carries Phosphoserine. The interval 154–171 (ILQENDFGDFGMDDREIM) is interaction with NIPBL. Ser-175 is modified (phosphoserine). Lys-216 is covalently cross-linked (Glycyl lysine isopeptide (Lys-Gly) (interchain with G-Cter in SUMO2)). Ser-249 bears the Phosphoserine mark. The disordered stretch occupies residues 258 to 285 (QPAHDDMDEDDNVSMGGPDSPDSVDPVE). The segment covering 271-285 (SMGGPDSPDSVDPVE) has biased composition (low complexity). The segment at 287 to 403 (MPTMTDQTTL…TPLVPEDLRK (117 aa)) is interaction with WAPL and PDS5B. An interaction with STAG1 region spans residues 362-403 (MWKETGGVEKLFSLPAQPLWNNRLLKLFTRCLTPLVPEDLRK). The residue at position 394 (Thr-394) is a Phosphothreonine. Lys-418 participates in a covalent cross-link: Glycyl lysine isopeptide (Lys-Gly) (interchain with G-Cter in SUMO2). Over residues 423-440 (PEVPREDQQQQHQQRDVI) the composition is skewed to basic and acidic residues. Disordered stretches follow at residues 423–489 (PEVP…EPVM) and 517–558 (PELE…RWNK). Ser-454 is subject to Phosphoserine. A compositionally biased stretch (basic and acidic residues) spans 522–532 (LPEKEKEKEKE). Positions 533 to 551 (KEDDEEEEDEDASGGDQDQ) are enriched in acidic residues. Residue Ser-545 is modified to Phosphoserine. The residue at position 623 (Thr-623) is a Phosphothreonine.

The protein belongs to the rad21 family. Component of the cohesin complex, which consists of an SMC1A/B and SMC3 heterodimer core and 2 non-Smc subunits RAD21 and STAG1/SA1, STAG2/SA2 or STAG3/SA3. Interacts (via C-terminus) with SMC1A and (via N-terminus) with SMC3; these interactions are direct. The cohesin complex interacts with NUMA1. The cohesin complex also interacts with CDCA5, PDS5A and PDS5B; this interaction might regulate the ability of the cohesin complex to mediate sister chromatid cohesion. The interaction with PDS5B is direct and is stimulated by STAG1/SA1. The cohesin complex interacts with the cohesin loading complex subunits NIPBL/Scc2 (via HEAT repeats) and MAU2/Scc4. NIPBL directly contacts all members of the complex, RAD21, SMC1A/B, SMC3 and STAG1. The cohesin complex interacts with DDX11/ChIR1. Directly interacts with WAPL; this interaction is stimulated by STAG1/SA1. Interacts with the ISWI chromatin remodeling complex component SMARCA5/SNF2h; the interaction is direct. Interacts with the NuRD complex component CHD4; the interaction is direct. Post-translationally, cleaved by separase/ESPL1 at the onset of anaphase; this cleavage is required for sister chromatid separation and cytokinesis. Cleaved by caspase-3/CASP3 or caspase-7/CASP7 at the beginning of apoptosis. Phosphorylated; becomes hyperphosphorylated in M phase of cell cycle. The large dissociation of cohesin from chromosome arms during prophase may be partly due to its phosphorylation by PLK1. In terms of tissue distribution, expressed in the gut (at protein level).

Its subcellular location is the nucleus. It localises to the nucleus matrix. It is found in the chromosome. The protein resides in the centromere. The protein localises to the cytoplasm. Its subcellular location is the cytoskeleton. It localises to the spindle pole. It is found in the cytosol. Functionally, as a member of the cohesin complex, involved in sister chromatid cohesion from the time of DNA replication in S phase to their segregation in mitosis, a function that is essential for proper chromosome segregation, post-replicative DNA repair, and the prevention of inappropriate recombination between repetitive regions. The cohesin complex may also play a role in spindle pole assembly during mitosis. In interphase, cohesins may function in the control of gene expression by binding to numerous sites within the genome. May control RUNX1 gene expression. Binds to and represses APOB gene promoter. May play a role in embryonic gut development, possibly through the regulation of enteric neuron development. May promote apoptosis. The polypeptide is Double-strand-break repair protein rad21 homolog (RAD21) (Homo sapiens (Human)).